The sequence spans 114 residues: MNITLTKRQQEFLLLNGWLQLQCGHAERACILLDALLTLNPEHLAGRRCRLVALLNNNQGERAEKEAQWLISHDPLQAGNWLCLSRAQQLNGDLDKARHAYQHYLELKDHNESP.

Binds to YscX.

Its subcellular location is the cytoplasm. Required for Yop secretion. Functions probably as a chaperone which stabilizes YscX within the cell, before its secretion. The polypeptide is Chaperone protein YscY (yscY) (Yersinia enterocolitica).